The chain runs to 330 residues: Inactive hydroxysteroid dehydrogenase-like protein 1 (330 aa).

Ala-2 is subject to N-acetylalanine. Positions 2–82 (AAVDSFYLLY…SGATDGIGKA (81 aa)) are required for mitochondria translocation. NADP(+)-binding positions include 74 to 80 (GATDGIG), Asp-125, and Lys-222.

The protein belongs to the short-chain dehydrogenases/reductases (SDR) family. 17-beta-HSD 3 subfamily. As to quaternary structure, interacts with STYXL1. In terms of tissue distribution, highly expressed in testis and ovary. Also detected in thyroid, spinal cord, adrenal gland, heart, placenta, skeletal muscle, small intestine, colon, spleen, prostate and pancreas.

Its subcellular location is the mitochondrion. The polypeptide is Inactive hydroxysteroid dehydrogenase-like protein 1 (HSDL1) (Homo sapiens (Human)).